Here is a 208-residue protein sequence, read N- to C-terminus: Small ribosomal subunit protein uS2 (208 aa).

This sequence belongs to the universal ribosomal protein uS2 family.

The polypeptide is Small ribosomal subunit protein uS2 (Pyrobaculum calidifontis (strain DSM 21063 / JCM 11548 / VA1)).